The chain runs to 811 residues: Exocyst complex component 6B (811 aa).

Positions 50 to 119 (MEKLETRIRN…LVIAMEELKQ (70 aa)) form a coiled coil. Residues 260–280 (STSPKSEQDSGILDVEDEEDD) form a disordered region.

The protein belongs to the SEC15 family. The exocyst complex is composed of SEC3, SEC5, SEC6, SEC8, SEC10, SEC15, EXO70 and EXO84.

Component of the exocyst complex involved in the docking of exocytic vesicles with fusion sites on the plasma membrane. This chain is Exocyst complex component 6B (EXOC6B), found in Homo sapiens (Human).